Reading from the N-terminus, the 48-residue chain is Keratin-associated protein 22-1 (48 aa).

Interacts with hair keratins.

In terms of biological role, in the hair cortex, hair keratin intermediate filaments are embedded in an interfilamentous matrix, consisting of hair keratin-associated proteins (KRTAP), which are essential for the formation of a rigid and resistant hair shaft through their extensive disulfide bond cross-linking with abundant cysteine residues of hair keratins. The matrix proteins include the high-sulfur and high-glycine-tyrosine keratins. The polypeptide is Keratin-associated protein 22-1 (KRTAP22-1) (Homo sapiens (Human)).